The following is a 91-amino-acid chain: Small ribosomal subunit protein uS19 (91 aa).

The protein belongs to the universal ribosomal protein uS19 family.

Its function is as follows. Protein S19 forms a complex with S13 that binds strongly to the 16S ribosomal RNA. The protein is Small ribosomal subunit protein uS19 of Methylacidiphilum infernorum (isolate V4) (Methylokorus infernorum (strain V4)).